A 101-amino-acid polypeptide reads, in one-letter code: Protein Tat (101 aa).

The tract at residues 1 to 20 (MEPVDPNLEPWKHPGSQPTT) is disordered. Residues 1–24 (MEPVDPNLEPWKHPGSQPTTACSN) are interaction with human CREBBP. The transactivation stretch occupies residues 1-48 (MEPVDPNLEPWKHPGSQPTTACSNCYCKVCCWHCQLCFLKKGLGISYG). Zn(2+) contacts are provided by Cys-22, Cys-25, and Cys-27. The cysteine-rich stretch occupies residues 22–37 (CSNCYCKVCCWHCQLC). Lys-28 is modified (N6-acetyllysine; by host PCAF). Zn(2+)-binding residues include Cys-30, His-33, Cys-34, and Cys-37. Positions 38 to 48 (FLKKGLGISYG) are core. Residues 48 to 101 (GKKKRKPRRGPPQGSKDHQTLIPKQPLPQSQRVSAGQEESKKKVESKAKTDRFA) are disordered. The short motif at 49-57 (KKKRKPRRG) is the Nuclear localization signal, RNA-binding (TAR), and protein transduction element. The segment at 49–86 (KKKRKPRRGPPQGSKDHQTLIPKQPLPQSQRVSAGQEE) is interaction with the host capping enzyme RNGTT. 2 positions are modified to N6-acetyllysine; by host EP300 and GCN5L2: Lys-50 and Lys-51. Residue Arg-52 is modified to Asymmetric dimethylarginine; by host PRMT6. Residue Lys-71 forms a Glycyl lysine isopeptide (Lys-Gly) (interchain with G-Cter in ubiquitin) linkage. The span at 85-101 (EESKKKVESKAKTDRFA) shows a compositional bias: basic and acidic residues.

It belongs to the lentiviruses Tat family. Interacts with host CCNT1. Associates with the P-TEFb complex composed at least of Tat, P-TEFb (CDK9 and CCNT1), TAR RNA, RNA Pol II. Recruits the HATs CREBBP, TAF1/TFIID, EP300, PCAF and GCN5L2. Interacts with host KAT5/Tip60; this interaction targets the latter to degradation. Interacts with the host deacetylase SIRT1. Interacts with host capping enzyme RNGTT; this interaction stimulates RNGTT. Binds to host KDR, and to the host integrins ITGAV/ITGB3 and ITGA5/ITGB1. Interacts with host KPNB1/importin beta-1 without previous binding to KPNA1/importin alpha-1. Interacts with EIF2AK2. Interacts with host nucleosome assembly protein NAP1L1; this interaction may be required for the transport of Tat within the nucleus, since the two proteins interact at the nuclear rim. Interacts with host C1QBP/SF2P32; this interaction involves lysine-acetylated Tat. Interacts with the host chemokine receptors CCR2, CCR3 and CXCR4. Interacts with host DPP4/CD26; this interaction may trigger an anti-proliferative effect. Interacts with host LDLR. Interacts with the host extracellular matrix metalloproteinase MMP1. Interacts with host PRMT6; this interaction mediates Tat's methylation. Interacts with, and is ubiquitinated by MDM2/Hdm2. Interacts with host PSMC3 and HTATIP2. Interacts with STAB1; this interaction may overcome SATB1-mediated repression of IL2 and IL2RA (interleukin) in T cells by binding to the same domain than HDAC1. Interacts (when acetylated) with human CDK13, thereby increasing HIV-1 mRNA splicing and promoting the production of the doubly spliced HIV-1 protein Nef. Interacts with host TBP; this interaction modulates the activity of transcriptional pre-initiation complex. Interacts with host RELA. Interacts with host PLSCR1; this interaction negatively regulates Tat transactivation activity by altering its subcellular distribution. In terms of processing, asymmetrical arginine methylation by host PRMT6 seems to diminish the transactivation capacity of Tat and affects the interaction with host CCNT1. Acetylation by EP300, CREBBP, GCN5L2/GCN5 and PCAF regulates the transactivation activity of Tat. EP300-mediated acetylation of Lys-50 promotes dissociation of Tat from the TAR RNA through the competitive binding to PCAF's bromodomain. In addition, the non-acetylated Tat's N-terminus can also interact with PCAF. PCAF-mediated acetylation of Lys-28 enhances Tat's binding to CCNT1. Lys-50 is deacetylated by SIRT1. Post-translationally, polyubiquitination by host MDM2 does not target Tat to degradation, but activates its transactivation function and fosters interaction with CCNT1 and TAR RNA. In terms of processing, phosphorylated by EIF2AK2 on serine and threonine residues adjacent to the basic region important for TAR RNA binding and function. Phosphorylation of Tat by EIF2AK2 is dependent on the prior activation of EIF2AK2 by dsRNA.

Its subcellular location is the host nucleus. It localises to the host nucleolus. It is found in the host cytoplasm. The protein resides in the secreted. Transcriptional activator that increases RNA Pol II processivity, thereby increasing the level of full-length viral transcripts. Recognizes a hairpin structure at the 5'-LTR of the nascent viral mRNAs referred to as the transactivation responsive RNA element (TAR) and recruits the cyclin T1-CDK9 complex (P-TEFb complex) that will in turn hyperphosphorylate the RNA polymerase II to allow efficient elongation. The CDK9 component of P-TEFb and other Tat-activated kinases hyperphosphorylate the C-terminus of RNA Pol II that becomes stabilized and much more processive. Other factors such as HTATSF1/Tat-SF1, SUPT5H/SPT5, and HTATIP2 are also important for Tat's function. Besides its effect on RNA Pol II processivity, Tat induces chromatin remodeling of proviral genes by recruiting the histone acetyltransferases (HATs) CREBBP, EP300 and PCAF to the chromatin. This also contributes to the increase in proviral transcription rate, especially when the provirus integrates in transcriptionally silent region of the host genome. To ensure maximal activation of the LTR, Tat mediates nuclear translocation of NF-kappa-B by interacting with host RELA. Through its interaction with host TBP, Tat may also modulate transcription initiation. Tat can reactivate a latently infected cell by penetrating in it and transactivating its LTR promoter. In the cytoplasm, Tat is thought to act as a translational activator of HIV-1 mRNAs. Its function is as follows. Extracellular circulating Tat can be endocytosed by surrounding uninfected cells via the binding to several surface receptors such as CD26, CXCR4, heparan sulfate proteoglycans (HSPG) or LDLR. Neurons are rarely infected, but they internalize Tat via their LDLR. Through its interaction with nuclear HATs, Tat is potentially able to control the acetylation-dependent cellular gene expression. Modulates the expression of many cellular genes involved in cell survival, proliferation or in coding for cytokines or cytokine receptors. Tat plays a role in T-cell and neurons apoptosis. Tat induced neurotoxicity and apoptosis probably contribute to neuroAIDS. Circulating Tat also acts as a chemokine-like and/or growth factor-like molecule that binds to specific receptors on the surface of the cells, affecting many cellular pathways. In the vascular system, Tat binds to ITGAV/ITGB3 and ITGA5/ITGB1 integrins dimers at the surface of endothelial cells and competes with bFGF for heparin-binding sites, leading to an excess of soluble bFGF. This Human immunodeficiency virus type 1 group M subtype A (isolate U455) (HIV-1) protein is Protein Tat.